A 311-amino-acid chain; its full sequence is Salutaridine reductase (311 aa).

NADP(+) contacts are provided by residues 21–24 (NKGI), Arg-44, 70–71 (DV), and Asn-98. Residues Tyr-129 and Ser-180 each contribute to the substrate site. NADP(+) is bound by residues Tyr-236, Lys-240, and 267–272 (VKTEMN). The Proton acceptor role is filled by Tyr-236. The cysteines at positions 263 and 305 are disulfide-linked.

It belongs to the short-chain dehydrogenases/reductases (SDR) family.

The enzyme catalyses (7S)-salutaridinol + NADP(+) = salutaridine + NADPH + H(+). The protein operates within alkaloid biosynthesis; morphine biosynthesis. Strong substrate inhibition. Was thought to be due to mutually exclusive productive and non-productive modes of substrate binding in the active site. Alternatively, SALR may undergo significant conformational changes during catalytic turnover. In terms of biological role, short-chain dehydrogenases/reductases involved in biosynthesis of morphinan-type benzylisoquinoline and opiate alkaloids natural products. Catalyzes specifically the stereospecific conversion of salutaridine to salutaridinol. The polypeptide is Salutaridine reductase (Papaver somniferum (Opium poppy)).